The following is a 1431-amino-acid chain: SLPSLLTRLEQMPDYSIFRGYIIHYNLASAIESADAYTVFVPNNEAIENYIREKKATSLKEDILRYHVVLGEKLLKNDLHNGMHRETMLGFSYLLAFFLRNDQLYVNEAPINYTNVATDKGVIHGLEKVLEIQKNRCDNNDTIIVRGECGKCSQQAPCPLETKPLRETRKCIYSIYFMGKRSVFIGCQPQCVRTIITRACCAGFFGPQCQACPGRGQNVCSGNGFCLDGVNGTGTCQCGLGFNGTACETCTEGKYGIHCDQACSCVHGRCSQGPLGDGSCDCDVGWRGVKCDMEITTDNCNGTCHTSANCLLDPDGKASCKCAAGFRGNGTVCTAINACETSNGGCSTKADCKRTTPGNRVCVCKAGYTGDGIVCLEINPCLENHGGCDRNAECTQTGPNQAVCNCLPKYTGDGKVCSLINVCLTNNGGCSPFAFCNYTEQDQRICTCKPDYTGDGIVCRGSIYGELPKNPSTSQYFFQLQEHAVRELAGPGPFTVFAPLSSSFNHEPRIKDWDQQGLMSQVLRYHVVGCQQLLLDNLKVTTSATTLQGEPVSISVSQDTVFINNEAKVLSSDIISTNGVIHVIDKLLSPKNLLITPKDALGRVLQNLTTVAANHGYTKFSKLIQDSGLLSVITDSIHTPVTVFWPTDKALEALPPEQQDFLFNQDNKDKLKSYLKFHVIRDSKALASDLPRSASWKTLQGSELSVRCGTGSDIGELFLNEQMCRFIHRGLLFDVGVAYGIDCLLMNPTLGGRCDTFTTFDIPGECGSCIFTPKCPLKSKPKGVKKKCIYNPLPFRRNVEGCQNLCTVVIQTPRCCHGYFMPDCQACPGGPDTPCNNRGMCRDLYTPMGQCLCHTGFNGTACELCWHGRFGPDCQPRSCSEHGQCDEGITGSGECLCETGWTAASCDTPTAVFAVCTPACSVHATCTENNTCVCNLNYEGDGITCTVVDFCKQNNGGCAKVAKCSQKGTQVSCSCKKGYKGDGYSCIEIDPCADGVNGGCHEHATCRMTGPGKHKCECKSHYVGDGVDCEPEQLPLDRCLQDNGQCHPDASCADLYFQDTTVGVFHLRSPLGQYKLTFDKAKEACAKEAATIATYNQLSYAQKAKYHLCSAGWLESGRVAYPTTYASQKCGANVVGIVDYGSRANKSEMWDVFCYRMKDVNCTCKAGYVGDGFSCSGNLLQVLMSFPSLTNFLTEVLAFSKSSARGQAFLKHLTDLSIRGTLFVPQNSGLPGNKSLSGRDIEHHLTNVNVSFYNDLVNGTFLRTMLGSQLLITFSQDQLHQETRFVDGRSILQWDIIAANGILHIISEPLRAPPTAATAAHSGLGTGIFCAVVLVTGAIALAAYSYFRLKQRTTGFQRFDQKRTLMSWLLASSSPRISQTLCMRPQRRHPQSPPVTPSQTLENRIWRTATLWGHCGPDMRSQQATTVTVPR.

At S1–S1322 the chain is on the extracellular side. Residues L2 to L130 enclose the FAS1 domain. N-linked (GlcNAc...) asparagine glycans are attached at residues N112 and N140. Residues P207–Q272 enclose the Laminin EGF-like 1 domain. 18 disulfides stabilise this stretch: C212-C226, C220-C236, C238-C247, C259-C270, C263-C280, C282-C291, C300-C310, C304-C320, C322-C333, C339-C352, C346-C362, C364-C375, C381-C394, C388-C404, C406-C417, C423-C436, C430-C446, and C448-C459. N231 and N243 each carry an N-linked (GlcNAc...) asparagine glycan. EGF-like domains follow at residues T296–T334, A335–L376, E377–S418, and L419–R460. An N-linked (GlcNAc...) asparagine glycan is attached at N301. Residue N329 is glycosylated (N-linked (GlcNAc...) asparagine). N-linked (GlcNAc...) asparagine glycosylation occurs at N437. FAS1 domains lie at R460–L588 and V604–L745. N-linked (GlcNAc...) asparagine glycosylation is present at N607. The region spanning P822–E887 is the Laminin EGF-like 2 domain. Cystine bridges form between C827/C841, C835/C851, C853/C862, C874/C885, C879/C895, and C897/C906. N858 carries N-linked (GlcNAc...) asparagine glycosylation. N929 is a glycosylation site (N-linked (GlcNAc...) asparagine). EGF-like domains follow at residues V947–I987 and E988–E1030. 8 disulfide bridges follow: C951–C964, C958–C973, C975–C986, C992–C1006, C1000–C1016, C1018–C1029, C1085–C1154, and C1109–C1130. The 94-residue stretch at G1063–R1156 folds into the Link domain. Residues N1145, N1161, N1233, N1249, and N1258 are each glycosylated (N-linked (GlcNAc...) asparagine). Residues S1176–L1310 form the FAS1 4 domain. The helical transmembrane segment at G1323–A1343 threads the bilayer. Residues Y1344 to R1431 lie on the Cytoplasmic side of the membrane. Residues W1368–S1378 form an interaction with TMSB4X region.

As to quaternary structure, interacts with GULP1, heparin, alpha-M/beta-2 integrin (ITGAM and ITGB2), and thymosin beta 4 (TMSB4X). Glycosylated. In terms of processing, proteolytically processed to yield a 175 kDa protein. In terms of tissue distribution, initially expressed in all vascular cells, including those of sinusoidal-like structures, vitellin veins, and hepatic veins or sinus venosus, in E13.5 fetal liver. The expression then progressively disappears in the portal and hepatic veins, but the expression in sinusoidals endothelial cells (SECs) is retained and becomes stronger during development.

The protein localises to the cytoplasm. It localises to the cell membrane. In terms of biological role, phosphatidylserine receptor that enhances the engulfment of apoptotic cells. Hyaluronan receptor that binds to and mediates endocytosis of hyaluronic acid (HA). Also acts, in different species, as a primary systemic scavenger receptor for heparin (Hep), chondroitin sulfate (CS), dermatan sulfate (DS), nonglycosaminoglycan (GAG), acetylated low-density lipoprotein (AcLDL), pro-collagen propeptides and advanced glycation end products (AGE). May serve to maintain tissue integrity by supporting extracellular matrix turnover or it may contribute to maintaining fluidity of bodily liquids by resorption of hyaluronan. Counter receptor which plays an important role in lymphocyte recruitment in the hepatic vasculature. Binds to both Gram-positive and Gram-negative bacteria and may play a role in defense against bacterial infection. The proteolytically processed 175 kDa form also functions as an endocytosis receptor for heparin internalization as well as HA and CS. This Rattus norvegicus (Rat) protein is Stabilin-2.